Here is a 184-residue protein sequence, read N- to C-terminus: Uroplakin-2 (184 aa).

Positions 1–25 (MASPLPVRTLPLILILLAVLAPGAS) are cleaved as a signal peptide. A propeptide spanning residues 26-84 (DFNISSLSGPLSPALTESLLVALPPCHLTGGNATLMVRRANDSKVVKSSFMVPPCRGRR) is cleaved from the precursor. Asn-28, Asn-57, and Asn-66 each carry an N-linked (GlcNAc...) asparagine glycan. Residues 85 to 155 (ELVSVVDSGS…IGLGMARTGG (71 aa)) lie on the Lumenal side of the membrane. A helical membrane pass occupies residues 156 to 180 (MVVITVLLSVAMFLLVVGFITALAL). At 181-184 (GARK) the chain is on the cytoplasmic side.

It belongs to the uroplakin-2 family. As to quaternary structure, interacts with uroplakin-1a (UPK1A). In terms of tissue distribution, expressed only in the urothelium. Localizes to urothelial superficial cells.

It localises to the cell membrane. Its function is as follows. Component of the asymmetric unit membrane (AUM); a highly specialized biomembrane elaborated by terminally differentiated urothelial cells. May play an important role in regulating the assembly of the AUM. The polypeptide is Uroplakin-2 (UPK2) (Sus scrofa (Pig)).